Reading from the N-terminus, the 1091-residue chain is ATP-citrate synthase (1091 aa).

Residues 4–265 enclose the ATP-grasp domain; the sequence is KAISEQTGKE…LDAKSGASLK (262 aa). Residues lysine 58, arginine 66, glycine 67, proline 109, valine 111, and glutamate 118 each coordinate ATP. Residue tyrosine 131 is modified to Phosphotyrosine. An ATP-binding site is contributed by aspartate 216. Residues aspartate 257, serine 260, and alanine 262 each coordinate Mg(2+). Serine 263 carries the post-translational modification Phosphoserine. Glycine 309, asparagine 346, threonine 348, tyrosine 364, and arginine 379 together coordinate citrate. Residues 442–457 are compositionally biased toward low complexity; that stretch reads SGSTSTPAPSRTASFS. The disordered stretch occupies residues 442-471; it reads SGSTSTPAPSRTASFSESRTDEVAPAKKAK. Threonine 447 is modified (phosphothreonine). Serine 451 carries the phosphoserine modification. Serine 455 carries the phosphoserine; by PKA and PKB/AKT1 or PKB/AKT2 or BCKDK modification. Serine 459 bears the Phosphoserine mark. N6-acetyllysine; alternate occurs at positions 530, 536, and 544. Glycyl lysine isopeptide (Lys-Gly) (interchain with G-Cter in ubiquitin); alternate cross-links involve residues lysine 530, lysine 536, and lysine 544. Threonine 629 carries the post-translational modification Phosphothreonine. Serine 653 is modified (phosphoserine). Tyrosine 672 is modified (phosphotyrosine). Residue histidine 750 is the Tele-phosphohistidine intermediate of the active site. 769-779 contributes to the CoA binding site; that stretch reads LKEAGVFVPRS. Phosphoserine is present on serine 829. Residues lysine 938, lysine 958, lysine 968, and lysine 1067 each carry the N6-acetyllysine modification. Serine 1090 carries the post-translational modification Phosphoserine.

This sequence in the N-terminal section; belongs to the succinate/malate CoA ligase beta subunit family. The protein in the C-terminal section; belongs to the succinate/malate CoA ligase alpha subunit family. Homotetramer. Mg(2+) serves as cofactor. Phosphorylated by PKA and GSK3 in a sequential manner; phosphorylation results in activation of its activity. Phosphorylation on Thr-447 and Ser-451 depends on the phosphorylation state of Ser-455. Phosphorylation on Ser-455 is decreased by prior phosphorylation on the other 2 residues. Phosphorylated at Ser-455 by BCKDK and dephosphorylated by protein phosphatase PPM1K. Post-translationally, ISGylated. In terms of processing, acetylated at Lys-530, Lys-536 and Lys-544 by KAT2B/PCAF. Acetylation is promoted by glucose and stabilizes the protein, probably by preventing ubiquitination at the same sites. Acetylation promotes de novo lipid synthesis. Deacetylated by SIRT2. Ubiquitinated at Lys-530, Lys-536 and Lys-544 by the BCR(KLHL25) E3 ubiquitin ligase complex and UBR4, leading to its degradation. Ubiquitination is probably inhibited by acetylation at same site. BCR(KLHL25)-mediated degradation of ACLY promotes fatty acid oxidation and is required for differentiation of inducible regulatory T (iTreg) cells.

The protein localises to the cytoplasm. Its subcellular location is the cytosol. The catalysed reaction is oxaloacetate + acetyl-CoA + ADP + phosphate = citrate + ATP + CoA. Phosphorylation results in activation of its activity. Glucose 6-phosphate, fructose 6-phosphate, fructose 2,6-bisphosphate, ribulose 5-phosphate, and fructose 1,6-bisphosphate also act as activators. Functionally, catalyzes the cleavage of citrate into oxaloacetate and acetyl-CoA, the latter serving as common substrate in multiple biochemical reactions in protein, carbohydrate and lipid metabolism. In Bos taurus (Bovine), this protein is ATP-citrate synthase (ACLY).